We begin with the raw amino-acid sequence, 601 residues long: Elongation factor 4 (601 aa).

Positions 6–188 (NYIRNFSIVA…AIVTQLPSPR (183 aa)) constitute a tr-type G domain. Residues 18–23 (DHGKST) and 135–138 (NKVD) contribute to the GTP site.

It belongs to the TRAFAC class translation factor GTPase superfamily. Classic translation factor GTPase family. LepA subfamily.

It localises to the cell inner membrane. It catalyses the reaction GTP + H2O = GDP + phosphate + H(+). Functionally, required for accurate and efficient protein synthesis under certain stress conditions. May act as a fidelity factor of the translation reaction, by catalyzing a one-codon backward translocation of tRNAs on improperly translocated ribosomes. Back-translocation proceeds from a post-translocation (POST) complex to a pre-translocation (PRE) complex, thus giving elongation factor G a second chance to translocate the tRNAs correctly. Binds to ribosomes in a GTP-dependent manner. The polypeptide is Elongation factor 4 (Bartonella henselae (strain ATCC 49882 / DSM 28221 / CCUG 30454 / Houston 1) (Rochalimaea henselae)).